A 511-amino-acid polypeptide reads, in one-letter code: Maturase K (511 aa).

The protein belongs to the intron maturase 2 family. MatK subfamily.

It is found in the plastid. Its subcellular location is the chloroplast. Functionally, usually encoded in the trnK tRNA gene intron. Probably assists in splicing its own and other chloroplast group II introns. The sequence is that of Maturase K from Pistia stratiotes (Water lettuce).